We begin with the raw amino-acid sequence, 443 residues long: Glucose-6-phosphate isomerase (443 aa).

Catalysis depends on Glu285, which acts as the Proton donor. Active-site residues include His306 and Lys420.

It belongs to the GPI family.

The protein localises to the cytoplasm. The catalysed reaction is alpha-D-glucose 6-phosphate = beta-D-fructose 6-phosphate. The protein operates within carbohydrate biosynthesis; gluconeogenesis. Its pathway is carbohydrate degradation; glycolysis; D-glyceraldehyde 3-phosphate and glycerone phosphate from D-glucose: step 2/4. Its function is as follows. Catalyzes the reversible isomerization of glucose-6-phosphate to fructose-6-phosphate. In Staphylococcus epidermidis (strain ATCC 12228 / FDA PCI 1200), this protein is Glucose-6-phosphate isomerase.